We begin with the raw amino-acid sequence, 757 residues long: Transcription factor FBD3 (757 aa).

Residues 1 to 24 are disordered; that stretch reads MSSKRLSQNEQEKSPGTGPPTHKR. The zn(2)-C6 fungal-type DNA-binding region spans 31 to 58; it reads CNACRMRKSRCDGHRPSCSSCLSLGVNC. 2 disordered regions span residues 106–161 and 202–222; these read GGTD…DANT and VAPSASNQASGPGDGVTTDVP. The segment covering 111-120 has biased composition (basic and acidic residues); sequence NNHHNNHDSP. Polar residues predominate over residues 125-135; the sequence is TIAQSITSSRP.

The protein resides in the nucleus. Functionally, transcription factor; part of the Fusarium detoxification of benzoxazolinone cluster involved in the degradation of benzoxazolinones produced by the host plant. Maize, wheat, and rye produce the 2 benzoxazinone phytoanticipins 2,4-dihy-droxy-7-methoxy-1,4-benzoxazin-3-one (DIMBOA) and 2,4-dihydroxy-1,4-benzoxazin-3-one (DIBOA) that, due to their inherent instability once released, spontaneously degrade to the more stable corresponding benzoxazolinones, 6-methoxy-2-benzoxazolinone (MBOA) and 2-benzoxazolinone (BOA), respectively. FDB3 controls the transcription of the FDB gene cluster in response to 6-methoxy-2-benzoxazolinone (MBOA). In Fusarium pseudograminearum (strain CS3096) (Wheat and barley crown-rot fungus), this protein is Transcription factor FBD3.